The sequence spans 469 residues: Transcription factor E2FB (469 aa).

Disordered stretches follow at residues 1 to 28 (MSEE…PPLV) and 84 to 118 (QTPV…AGSP). 2 stretches are compositionally biased toward polar residues: residues 8-22 (QFPS…SLSS) and 100-118 (SAKS…AGSP). A DNA-binding region spans residues 129-194 (RYDSSLGLLT…TLKNRIQWKG (66 aa)). The stretch at 202–246 (ETIESIANLQDEVQNLAAEEARLDDQIRESQERLTSLSEDENNKR) forms a coiled coil. The leucine-zipper stretch occupies residues 210-238 (LQDEVQNLAAEEARLDDQIRESQERLTSL). A disordered region spans residues 319 to 374 (PQADEPSNVPDEPSNVPDVPSNLPSTSGLPENHDVSMPMKEESTERNMETQEVDDT). Positions 349 to 374 (ENHDVSMPMKEESTERNMETQEVDDT) are enriched in basic and acidic residues. The segment at 403-419 (DYWFRSEVGEVSITDMW) is retinoblastoma protein binding. The tract at residues 426–469 (DWNQMITFDQDHAGPSDNKILEQPQTPSSPTPEESTATRSPTGS) is disordered. Residues 447 to 469 (EQPQTPSSPTPEESTATRSPTGS) show a composition bias toward low complexity.

The protein belongs to the E2F/DP family. As to quaternary structure, heterodimer with DP proteins. Interacts (via dimerization domain) preferentially with DPA, but also with DPB. Interacts with PURA1 and retinoblastoma-related protein RBR1. Component of a DREAM-like complex which modulates a variety of developmentally regulated genes and of the mitotic genes in proliferating and differentiated cells. Interacts with MYB3R4 only at early stages of leaves development. Post-translationally, phosphorylated. As to expression, expressed in proliferating cells and several differentiated tissues. Detected in inflorescence and shoot apical meristems, cotyledonary vascular tissues, leaf primordia, young leaves, base of trichomes, central cylinder and elongation zone of roots, lateral root primordia, flowers, pistils of immature flowers and pollen grains.

It localises to the cytoplasm. Its subcellular location is the nucleus. Transcription activator that binds DNA cooperatively with DP proteins through the E2 recognition site, 5'-TTTC[CG]CGC-3' found in the promoter region of a number of genes whose products are involved in cell cycle regulation or in DNA replication. The binding of retinoblastoma-related proteins represses transactivation. Involved in the control of cell-cycle progression from G1 to S phase and from G2 to M phase. Stimulates cell proliferation and delays differentiation. Represses cell enlargement and endoreduplication in auxin-free conditions. In Arabidopsis thaliana (Mouse-ear cress), this protein is Transcription factor E2FB (E2FB).